Reading from the N-terminus, the 372-residue chain is Aminomethyltransferase (372 aa).

It belongs to the GcvT family. As to quaternary structure, the glycine cleavage system is composed of four proteins: P, T, L and H.

It carries out the reaction N(6)-[(R)-S(8)-aminomethyldihydrolipoyl]-L-lysyl-[protein] + (6S)-5,6,7,8-tetrahydrofolate = N(6)-[(R)-dihydrolipoyl]-L-lysyl-[protein] + (6R)-5,10-methylene-5,6,7,8-tetrahydrofolate + NH4(+). The glycine cleavage system catalyzes the degradation of glycine. This chain is Aminomethyltransferase, found in Burkholderia mallei (strain NCTC 10247).